The chain runs to 341 residues: UDP-N-acetylenolpyruvoylglucosamine reductase (341 aa).

Positions 15-185 (LAQSCADLVE…TAVGLRLVKR (171 aa)) constitute an FAD-binding PCMH-type domain. Residue Arg-161 is part of the active site. Ser-231 functions as the Proton donor in the catalytic mechanism. Glu-327 is an active-site residue.

The protein belongs to the MurB family. It depends on FAD as a cofactor.

The protein resides in the cytoplasm. The catalysed reaction is UDP-N-acetyl-alpha-D-muramate + NADP(+) = UDP-N-acetyl-3-O-(1-carboxyvinyl)-alpha-D-glucosamine + NADPH + H(+). It functions in the pathway cell wall biogenesis; peptidoglycan biosynthesis. Functionally, cell wall formation. The sequence is that of UDP-N-acetylenolpyruvoylglucosamine reductase from Shewanella baltica (strain OS195).